Here is a 1130-residue protein sequence, read N- to C-terminus: Integrin alpha-6 (1130 aa).

The N-terminal stretch at 1–23 (MAAAGQLCLLYLSAGLLSRLGAA) is a signal peptide. Residues 24-1050 (FNLDTREDNV…FPSKTVAQYS (1027 aa)) are Extracellular-facing. FG-GAP repeat units follow at residues 30-95 (EDNV…GPCT), 101-166 (NDAD…IEDD), 176-229 (DGRL…FFDM), 283-339 (EQPD…KSAH), 340-402 (LLPE…RWNN), 403-458 (VKPI…GINT), and 459-518 (KPTQ…VTPN). An N-linked (GlcNAc...) asparagine glycan is attached at N78. 3 disulfides stabilise this stretch: C86–C94, C131–C154, and C175–C188. N-linked (GlcNAc...) asparagine glycosylation is found at N223 and N323. Residues D363, N365, D367, and D371 each contribute to the Ca(2+) site. N-linked (GlcNAc...) asparagine glycosylation occurs at N409. 10 residues coordinate Ca(2+): D425, N427, D429, Y431, D433, D480, D482, N484, Y486, and D488. Disulfide bonds link C528–C535, C541–C601, C665–C671, and C765–C776. N770, N787, N930, and N966 each carry an N-linked (GlcNAc...) asparagine glycan. Intrachain disulfides connect C920/C967 and C973/C978. N997 carries N-linked (GlcNAc...) asparagine glycosylation. Residues 1051 to 1076 (GVPWWIILVAILAGILMLALLVFILW) form a helical membrane-spanning segment. Phosphoserine occurs at positions 1059 and 1064. Positions 1077-1083 (KCGFFKR) are interaction with HPS5. Topologically, residues 1077–1130 (KCGFFKRSRYDDSVPRYHAVRIRKEEREIKDEKYIDNLEKKQWITKWNENESYS) are cytoplasmic. Residue C1078 is the site of S-palmitoyl cysteine; by DHHC3 attachment. Residues 1079–1083 (GFFKR) carry the GFFKR motif motif. A Phosphoserine modification is found at R1103.

It belongs to the integrin alpha chain family. Heterodimer of an alpha and a beta subunit. The alpha subunit is composed of a heavy and a light chain linked by a disulfide bond. Alpha-6 associates with either beta-1 (ITGB1) or beta-4 (ITGB4) to form ITGA6:ITGB1 and ITGA6:ITGB4, respectively. ITGA6:ITGB1 is found in a complex with CD9; interaction takes place in oocytes and is involved in sperm-egg fusion. ITGA6:ITGB4 is found in a ternary complex with NRG1 and ERBB3. ITGA6:ITGB4 is found in a ternary complex with IGF1 and IGF1R. ITGA6:ITGB4 interacts with IGF2. Interacts with ADAM9. Interacts with RAB21. Interacts with MDK. ITGA6:ITGB1 interacts with MDK; this interaction mediates MDK-induced neurite outgrowth. Interacts with CD82; this interaction down-regulates ITGA6-mediated cell adhesion. Post-translationally, isoforms containing segment A, but not segment B, are the major targets for PMA-induced phosphorylation. Phosphorylation occurs on 'Ser-1103' of isoform alpha-6X1X2A. Phosphorylation is not required for the induction of integrin alpha-6A/beta-1 high affinity but may reduce the affinity for ligand. Undergoes PLAU-mediated cleavage at residues Arg-634-635-Arg in a time-dependent manner to produce processed integrin alpha-6 (alpha6p). Production of alpha6p enhances prostate cancer cell invasion and migration. In terms of processing, palmitoylation by DHHC3 enhances stability and cell surface expression. As to expression, integrin alpha-6/beta-4 is predominantly expressed by epithelia. Isoforms containing segment X1 are ubiquitously expressed. Isoforms containing segment X1X2 are expressed in heart, kidney, placenta, colon, duodenum, myoblasts and myotubes, and in a limited number of cell lines; they are always coexpressed with the ubiquitous isoform containing segment X1. In some tissues (e.g. Salivary gland), isoforms containing cytoplasmic segment A and isoforms containing segment B are detected while in others, only isoforms containing one cytoplasmic segment are found (segment A in epidermis and segment B in kidney). Processed integrin alpha-6: Expressed at low levels in normal prostate tissue with elevated levels in prostate cancer tissue (at protein level).

The protein localises to the cell membrane. Integrin alpha-6/beta-1 (ITGA6:ITGB1) is a receptor for laminin on platelets. Integrin alpha-6/beta-1 (ITGA6:ITGB1) is present in oocytes and is involved in sperm-egg fusion. Integrin alpha-6/beta-4 (ITGA6:ITGB4) is a receptor for laminin in epithelial cells and it plays a critical structural role in the hemidesmosome. ITGA6:ITGB4 binds to NRG1 (via EGF domain) and this binding is essential for NRG1-ERBB signaling. ITGA6:ITGB4 binds to IGF1 and this binding is essential for IGF1 signaling. ITGA6:ITGB4 binds to IGF2 and this binding is essential for IGF2 signaling. This Homo sapiens (Human) protein is Integrin alpha-6 (ITGA6).